Here is a 248-residue protein sequence, read N- to C-terminus: Tyrosine recombinase XerD-like (248 aa).

In terms of domain architecture, Core-binding (CB) spans 1–72 (MIAFIEPFLA…TVNQFLYYLY (72 aa)). The Tyr recombinase domain maps to 92–248 (SLKPQLTRLD…PITLEKYYKM (157 aa)). The active site involves arginine 213. The O-(3'-phospho-DNA)-tyrosine intermediate role is filled by tyrosine 245.

Belongs to the 'phage' integrase family. XerD-like subfamily.

It is found in the cytoplasm. Putative tyrosine recombinase. Not involved in the cutting and rejoining of the recombining DNA molecules on dif(SL) site. This is Tyrosine recombinase XerD-like from Streptococcus equi subsp. zooepidemicus (strain MGCS10565).